The chain runs to 327 residues: Cytochrome f (327 aa).

The N-terminal stretch at 1–24 (MKRIGLVFCALLLLLGMGARPAAA) is a signal peptide. 4 residues coordinate heme: tyrosine 25, cysteine 45, cysteine 48, and histidine 49. A helical membrane pass occupies residues 293-313 (VKWLVAFLAAITITQVLLVLK).

It belongs to the cytochrome f family. The 4 large subunits of the cytochrome b6-f complex are cytochrome b6, subunit IV (17 kDa polypeptide, PetD), cytochrome f and the Rieske protein, while the 4 small subunits are PetG, PetL, PetM and PetN. The complex functions as a dimer. Requires heme as cofactor.

It is found in the cellular thylakoid membrane. Functionally, component of the cytochrome b6-f complex, which mediates electron transfer between photosystem II (PSII) and photosystem I (PSI), cyclic electron flow around PSI, and state transitions. The polypeptide is Cytochrome f (Synechococcus sp. (strain JA-2-3B'a(2-13)) (Cyanobacteria bacterium Yellowstone B-Prime)).